Reading from the N-terminus, the 225-residue chain is UPF0758 protein Shew185_0376 (225 aa).

Positions 102-224 (VLTNPDLTRD…IVSFAERGWI (123 aa)) constitute an MPN domain. Residues His173, His175, and Asp186 each contribute to the Zn(2+) site. Positions 173–186 (HNHPSGNAEPSQAD) match the JAMM motif motif.

The protein belongs to the UPF0758 family.

The protein is UPF0758 protein Shew185_0376 of Shewanella baltica (strain OS185).